We begin with the raw amino-acid sequence, 719 residues long: T-cell immunomodulatory protein homolog (719 aa).

An N-terminal signal peptide occupies residues 1–32 (MYNFLSCKKKSIILQVLLIICTYNILLNFVNI). Residues 33–677 (FVNNNEKNHK…LSVNPSKKFY (645 aa)) lie on the Extracellular side of the membrane. Residues Asn144, Asn277, Asn410, Asn540, and Asn659 are each glycosylated (N-linked (GlcNAc...) asparagine). A helical transmembrane segment spans residues 678–697 (SILYITLICLSVIGVLIFIL). Residues 698–719 (DRKEKVEDSKEELGFKSHFVIG) are Cytoplasmic-facing.

This sequence belongs to the TIP family.

The protein resides in the membrane. May protect the parasite against attack by the host immune system by immunomodulation. The sequence is that of T-cell immunomodulatory protein homolog from Plasmodium falciparum (isolate 3D7).